The sequence spans 121 residues: Large ribosomal subunit protein bL12 (121 aa).

This sequence belongs to the bacterial ribosomal protein bL12 family. In terms of assembly, homodimer. Part of the ribosomal stalk of the 50S ribosomal subunit. Forms a multimeric L10(L12)X complex, where L10 forms an elongated spine to which 2 to 4 L12 dimers bind in a sequential fashion. Binds GTP-bound translation factors.

Forms part of the ribosomal stalk which helps the ribosome interact with GTP-bound translation factors. Is thus essential for accurate translation. The protein is Large ribosomal subunit protein bL12 of Lactococcus lactis subsp. cremoris (strain MG1363).